We begin with the raw amino-acid sequence, 79 residues long: RNA-binding protein Hfq (79 aa).

A Sm domain is found at 10 to 70; that stretch reads DVFLNTVRKQ…ISTIMPGQPV (61 aa).

The protein belongs to the Hfq family. Homohexamer.

Functionally, RNA chaperone that binds small regulatory RNA (sRNAs) and mRNAs to facilitate mRNA translational regulation in response to envelope stress, environmental stress and changes in metabolite concentrations. Also binds with high specificity to tRNAs. The chain is RNA-binding protein Hfq from Bartonella henselae (strain ATCC 49882 / DSM 28221 / CCUG 30454 / Houston 1) (Rochalimaea henselae).